Reading from the N-terminus, the 307-residue chain is Metapyrocatechase (307 aa).

VOC domains follow at residues 7-122 (RPGH…LYAD) and 150-269 (RFDH…VFCG). Residues H153, H214, and E265 each contribute to the Fe cation site.

It belongs to the extradiol ring-cleavage dioxygenase family. As to quaternary structure, homotetramer. Fe(2+) serves as cofactor.

It carries out the reaction catechol + O2 = (2Z,4E)-2-hydroxy-6-oxohexa-2,4-dienoate + H(+). It functions in the pathway xenobiotic degradation; toluene degradation. The protein is Metapyrocatechase (bztE) of Pseudomonas aeruginosa.